Consider the following 439-residue polypeptide: Mitochondrial distribution and morphology protein 12 (439 aa).

The 439-residue stretch at 1 to 439 (MSIDINWEAA…VYPSFWTFLV (439 aa)) folds into the SMP-LTD domain. Over residues 71–84 (EEDEGDEDFSDDQD) the composition is skewed to acidic residues. 3 disordered regions span residues 71–104 (EEDE…GTWQ), 182–278 (TPLA…HEKK), and 362–385 (YIPG…RRDD). Positions 212-229 (DYPRPVHRQTDTDIDSGH) are enriched in basic and acidic residues. Polar residues predominate over residues 230-255 (SRPSTADTLNSINSQRISNPALSHPH). Residues 256 to 269 (SSNESHPDTRDHSP) are compositionally biased toward basic and acidic residues.

It belongs to the MDM12 family. As to quaternary structure, component of the ER-mitochondria encounter structure (ERMES) or MDM complex, composed of MMM1, MDM10, MDM12 and MDM34. An MMM1 homodimer associates with one molecule of MDM12 on each side in a pairwise head-to-tail manner, and the SMP-LTD domains of MMM1 and MDM12 generate a continuous hydrophobic tunnel for phospholipid trafficking.

The protein localises to the mitochondrion outer membrane. It localises to the endoplasmic reticulum membrane. Its function is as follows. Component of the ERMES/MDM complex, which serves as a molecular tether to connect the endoplasmic reticulum (ER) and mitochondria. Components of this complex are involved in the control of mitochondrial shape and protein biogenesis, and function in nonvesicular lipid trafficking between the ER and mitochondria. MDM12 is required for the interaction of the ER-resident membrane protein MMM1 and the outer mitochondrial membrane-resident beta-barrel protein MDM10. The MDM12-MMM1 subcomplex functions in the major beta-barrel assembly pathway that is responsible for biogenesis of all mitochondrial outer membrane beta-barrel proteins, and acts in a late step after the SAM complex. The MDM10-MDM12-MMM1 subcomplex further acts in the TOM40-specific pathway after the action of the MDM12-MMM1 complex. Essential for establishing and maintaining the structure of mitochondria and maintenance of mtDNA nucleoids. This is Mitochondrial distribution and morphology protein 12 from Uncinocarpus reesii (strain UAMH 1704).